A 316-amino-acid chain; its full sequence is MTKEFHHVTVLLHETVDMLDIKPDGIYVDATLGGSGHSAYLLSKLGEEGHLYCFDQDQKAIDNAQVTLKSYIDKGQVTFIKDNFRHLKARLTALGVDEIDGILYDLGVSSPQLDERERGFSYKQDAPLDMRMDRQSLLTAYEVVNTYPFNDLVKIFFKYGEDKFSKQIARKIEQARAIKPIETTTELAELIKAAKPAKELKKKGHPAKQIFQAIRIEVNDELGAADESIQDAMELLALDGRISVITFHSLEDRLTKQLFKEASTVDVPKGLPLIPEDMKPKFELVSRKPILPSHSELTANKRAHSAKLRVAKKIRK.

S-adenosyl-L-methionine contacts are provided by residues 35 to 37, aspartate 55, phenylalanine 84, aspartate 105, and glutamine 112; that span reads SGH.

This sequence belongs to the methyltransferase superfamily. RsmH family.

Its subcellular location is the cytoplasm. The enzyme catalyses cytidine(1402) in 16S rRNA + S-adenosyl-L-methionine = N(4)-methylcytidine(1402) in 16S rRNA + S-adenosyl-L-homocysteine + H(+). Functionally, specifically methylates the N4 position of cytidine in position 1402 (C1402) of 16S rRNA. In Streptococcus pyogenes serotype M18 (strain MGAS8232), this protein is Ribosomal RNA small subunit methyltransferase H.